We begin with the raw amino-acid sequence, 181 residues long: NADH-quinone oxidoreductase subunit I (181 aa).

4Fe-4S ferredoxin-type domains follow at residues 52–81 (TRDSSGRERCVACNLCAVACPVGCISLKKG) and 91–120 (KFFRINFSRCIFCGMCEEACPTAAIQLTPD). [4Fe-4S] cluster contacts are provided by Cys61, Cys64, Cys67, Cys71, Cys100, Cys103, Cys106, and Cys110.

The protein belongs to the complex I 23 kDa subunit family. In terms of assembly, NDH-1 is composed of 13 different subunits. Subunits NuoA, H, J, K, L, M, N constitute the membrane sector of the complex. [4Fe-4S] cluster serves as cofactor.

The protein resides in the cell inner membrane. It carries out the reaction a quinone + NADH + 5 H(+)(in) = a quinol + NAD(+) + 4 H(+)(out). Functionally, NDH-1 shuttles electrons from NADH, via FMN and iron-sulfur (Fe-S) centers, to quinones in the respiratory chain. The immediate electron acceptor for the enzyme in this species is believed to be ubiquinone. Couples the redox reaction to proton translocation (for every two electrons transferred, four hydrogen ions are translocated across the cytoplasmic membrane), and thus conserves the redox energy in a proton gradient. In Blochmanniella pennsylvanica (strain BPEN), this protein is NADH-quinone oxidoreductase subunit I.